We begin with the raw amino-acid sequence, 31 residues long: Cytochrome b6-f complex subunit 6 (31 aa).

A helical transmembrane segment spans residues 4-24; the sequence is LISYISLLAGFVIIASVFYLA.

It belongs to the PetL family. In terms of assembly, the 4 large subunits of the cytochrome b6-f complex are cytochrome b6, subunit IV (17 kDa polypeptide, PetD), cytochrome f and the Rieske protein, while the 4 small subunits are PetG, PetL, PetM and PetN. The complex functions as a dimer.

Its subcellular location is the plastid. It is found in the chloroplast thylakoid membrane. In terms of biological role, component of the cytochrome b6-f complex, which mediates electron transfer between photosystem II (PSII) and photosystem I (PSI), cyclic electron flow around PSI, and state transitions. PetL is important for photoautotrophic growth as well as for electron transfer efficiency and stability of the cytochrome b6-f complex. The protein is Cytochrome b6-f complex subunit 6 of Tupiella akineta (Green alga).